Consider the following 513-residue polypeptide: ATP synthase subunit alpha (513 aa).

G169–T176 provides a ligand contact to ATP.

The protein belongs to the ATPase alpha/beta chains family. F-type ATPases have 2 components, CF(1) - the catalytic core - and CF(0) - the membrane proton channel. CF(1) has five subunits: alpha(3), beta(3), gamma(1), delta(1), epsilon(1). CF(0) has three main subunits: a(1), b(2) and c(9-12). The alpha and beta chains form an alternating ring which encloses part of the gamma chain. CF(1) is attached to CF(0) by a central stalk formed by the gamma and epsilon chains, while a peripheral stalk is formed by the delta and b chains.

The protein resides in the cell inner membrane. The enzyme catalyses ATP + H2O + 4 H(+)(in) = ADP + phosphate + 5 H(+)(out). Its function is as follows. Produces ATP from ADP in the presence of a proton gradient across the membrane. The alpha chain is a regulatory subunit. The chain is ATP synthase subunit alpha from Actinobacillus succinogenes (strain ATCC 55618 / DSM 22257 / CCUG 43843 / 130Z).